Here is a 510-residue protein sequence, read N- to C-terminus: Glycerol kinase (510 aa).

Threonine 13 serves as a coordination point for ADP. Threonine 13 and threonine 14 together coordinate ATP. A sn-glycerol 3-phosphate-binding site is contributed by threonine 13. Arginine 17 is a binding site for ADP. Arginine 83, glutamate 84, tyrosine 135, and aspartate 255 together coordinate sn-glycerol 3-phosphate. Glycerol contacts are provided by arginine 83, glutamate 84, tyrosine 135, aspartate 255, and glutamine 256. ADP contacts are provided by threonine 277, glycine 321, glycine 421, and asparagine 425. The ATP site is built by threonine 277, glycine 321, and glycine 421.

Belongs to the FGGY kinase family.

The catalysed reaction is glycerol + ATP = sn-glycerol 3-phosphate + ADP + H(+). The protein operates within polyol metabolism; glycerol degradation via glycerol kinase pathway; sn-glycerol 3-phosphate from glycerol: step 1/1. Functionally, key enzyme in the regulation of glycerol uptake and metabolism. Catalyzes the phosphorylation of glycerol to yield sn-glycerol 3-phosphate. The protein is Glycerol kinase of Haloquadratum walsbyi (strain DSM 16790 / HBSQ001).